A 473-amino-acid polypeptide reads, in one-letter code: Photosystem II CP43 reaction center protein (473 aa).

Positions 1-14 (MKILYSLRRFYHVE) are excised as a propeptide. Position 15 is an N-acetylthreonine (T15). T15 carries the phosphothreonine modification. 5 consecutive transmembrane segments (helical) span residues 69 to 93 (LFEV…PHLA), 134 to 155 (LLGP…KDRN), 178 to 200 (KALY…RKIT), 255 to 275 (KPFA…LSYS), and 291 to 312 (WFNN…ASQA). E367 provides a ligand contact to [CaMn4O5] cluster. Residues 447 to 471 (RARAAAAGFEKGIDRDLEPVLYMNP) form a helical membrane-spanning segment.

Belongs to the PsbB/PsbC family. PsbC subfamily. As to quaternary structure, PSII is composed of 1 copy each of membrane proteins PsbA, PsbB, PsbC, PsbD, PsbE, PsbF, PsbH, PsbI, PsbJ, PsbK, PsbL, PsbM, PsbT, PsbX, PsbY, PsbZ, Psb30/Ycf12, at least 3 peripheral proteins of the oxygen-evolving complex and a large number of cofactors. It forms dimeric complexes. Requires Binds multiple chlorophylls and provides some of the ligands for the Ca-4Mn-5O cluster of the oxygen-evolving complex. It may also provide a ligand for a Cl- that is required for oxygen evolution. PSII binds additional chlorophylls, carotenoids and specific lipids. as cofactor.

The protein localises to the plastid. It localises to the chloroplast thylakoid membrane. One of the components of the core complex of photosystem II (PSII). It binds chlorophyll and helps catalyze the primary light-induced photochemical processes of PSII. PSII is a light-driven water:plastoquinone oxidoreductase, using light energy to abstract electrons from H(2)O, generating O(2) and a proton gradient subsequently used for ATP formation. The polypeptide is Photosystem II CP43 reaction center protein (Brachypodium distachyon (Purple false brome)).